We begin with the raw amino-acid sequence, 611 residues long: Phosphoenolpyruvate carboxykinase [GTP] (611 aa).

Substrate is bound by residues arginine 82 and tyrosine 222 to glycine 224. Mn(2+) is bound by residues lysine 231 and histidine 251. Residue serine 273 coordinates substrate. Alanine 274–asparagine 279 serves as a coordination point for GTP. Residue cysteine 275 is part of the active site. Aspartate 298 serves as a coordination point for Mn(2+). Asparagine 389–arginine 391 contributes to the substrate binding site. GTP contacts are provided by residues arginine 391, arginine 422, and phenylalanine 517–asparagine 520.

The protein belongs to the phosphoenolpyruvate carboxykinase [GTP] family. In terms of assembly, monomer. Mn(2+) is required as a cofactor.

The protein localises to the cytoplasm. The enzyme catalyses oxaloacetate + GTP = phosphoenolpyruvate + GDP + CO2. Its pathway is carbohydrate biosynthesis; gluconeogenesis. Functionally, catalyzes the conversion of oxaloacetate (OAA) to phosphoenolpyruvate (PEP), the rate-limiting step in the metabolic pathway that produces glucose from lactate and other precursors derived from the citric acid cycle. The protein is Phosphoenolpyruvate carboxykinase [GTP] of Arthrobacter sp. (strain FB24).